The primary structure comprises 145 residues: uncharacterized protein (145 aa).

Residues 86–110 (CERCGEEIPEPRLCAIPWTRYCAKC) form a dksA C4-type zinc finger.

This is an uncharacterized protein from Aquifex aeolicus (strain VF5).